Here is a 315-residue protein sequence, read N- to C-terminus: DNA-directed RNA polymerase subunit alpha (315 aa).

An alpha N-terminal domain (alpha-NTD) region spans residues 1-228 (MLEIEKPVIQ…EHFKLFMTLT (228 aa)). The interval 245–315 (KEKALEMTIE…LGLNLRLNDE (71 aa)) is alpha C-terminal domain (alpha-CTD).

Belongs to the RNA polymerase alpha chain family. In terms of assembly, homodimer. The RNAP catalytic core consists of 2 alpha, 1 beta, 1 beta' and 1 omega subunit. When a sigma factor is associated with the core the holoenzyme is formed, which can initiate transcription.

It catalyses the reaction RNA(n) + a ribonucleoside 5'-triphosphate = RNA(n+1) + diphosphate. Functionally, DNA-dependent RNA polymerase catalyzes the transcription of DNA into RNA using the four ribonucleoside triphosphates as substrates. The polypeptide is DNA-directed RNA polymerase subunit alpha (Clostridium perfringens (strain ATCC 13124 / DSM 756 / JCM 1290 / NCIMB 6125 / NCTC 8237 / Type A)).